We begin with the raw amino-acid sequence, 391 residues long: Phosphoglycerate kinase (391 aa).

Substrate is bound by residues 21 to 23 (DLN), R36, 59 to 62 (HLGR), R114, and R147. Residues K198, E315, and 344–347 (GGDT) each bind ATP.

This sequence belongs to the phosphoglycerate kinase family. As to quaternary structure, monomer.

It localises to the cytoplasm. It carries out the reaction (2R)-3-phosphoglycerate + ATP = (2R)-3-phospho-glyceroyl phosphate + ADP. It participates in carbohydrate degradation; glycolysis; pyruvate from D-glyceraldehyde 3-phosphate: step 2/5. The protein is Phosphoglycerate kinase of Actinobacillus pleuropneumoniae serotype 5b (strain L20).